We begin with the raw amino-acid sequence, 286 residues long: Aspartate/glutamate leucyltransferase (286 aa).

The protein belongs to the R-transferase family. Bpt subfamily.

It localises to the cytoplasm. It catalyses the reaction N-terminal L-glutamyl-[protein] + L-leucyl-tRNA(Leu) = N-terminal L-leucyl-L-glutamyl-[protein] + tRNA(Leu) + H(+). The enzyme catalyses N-terminal L-aspartyl-[protein] + L-leucyl-tRNA(Leu) = N-terminal L-leucyl-L-aspartyl-[protein] + tRNA(Leu) + H(+). Functions in the N-end rule pathway of protein degradation where it conjugates Leu from its aminoacyl-tRNA to the N-termini of proteins containing an N-terminal aspartate or glutamate. The protein is Aspartate/glutamate leucyltransferase of Jannaschia sp. (strain CCS1).